The chain runs to 397 residues: Arginine biosynthesis bifunctional protein ArgJ (397 aa).

The substrate site is built by Thr147, Lys173, Thr184, Glu270, Asn392, and Thr397. Residue Thr184 is the Nucleophile of the active site.

Belongs to the ArgJ family. Heterotetramer of two alpha and two beta chains.

Its subcellular location is the cytoplasm. It carries out the reaction N(2)-acetyl-L-ornithine + L-glutamate = N-acetyl-L-glutamate + L-ornithine. It catalyses the reaction L-glutamate + acetyl-CoA = N-acetyl-L-glutamate + CoA + H(+). Its pathway is amino-acid biosynthesis; L-arginine biosynthesis; L-ornithine and N-acetyl-L-glutamate from L-glutamate and N(2)-acetyl-L-ornithine (cyclic): step 1/1. It participates in amino-acid biosynthesis; L-arginine biosynthesis; N(2)-acetyl-L-ornithine from L-glutamate: step 1/4. Functionally, catalyzes two activities which are involved in the cyclic version of arginine biosynthesis: the synthesis of N-acetylglutamate from glutamate and acetyl-CoA as the acetyl donor, and of ornithine by transacetylation between N(2)-acetylornithine and glutamate. In Streptococcus thermophilus (strain CNRZ 1066), this protein is Arginine biosynthesis bifunctional protein ArgJ.